The chain runs to 149 residues: Large ribosomal subunit protein uL15 (149 aa).

Residues 14–63 (ASRKRVGRGSGSGLGCTSGKGNKGQNARAGGGVRPGFEGGQMPLQRRLPK) form a disordered region. Composition is skewed to gly residues over residues 21–35 (RGSG…GKGN) and 42–52 (AGGGVRPGFEG).

This sequence belongs to the universal ribosomal protein uL15 family. In terms of assembly, part of the 50S ribosomal subunit.

Functionally, binds to the 23S rRNA. This chain is Large ribosomal subunit protein uL15, found in Nitratidesulfovibrio vulgaris (strain DSM 19637 / Miyazaki F) (Desulfovibrio vulgaris).